The following is a 607-amino-acid chain: Phosphomethylpyrimidine synthase (607 aa).

Residues N216, M245, Y274, H310, S330 to G332, D371 to R374, and E410 each bind substrate. H414 contributes to the Zn(2+) binding site. Y437 serves as a coordination point for substrate. H478 serves as a coordination point for Zn(2+). C558, C561, and C566 together coordinate [4Fe-4S] cluster.

Belongs to the ThiC family. Homodimer. The cofactor is [4Fe-4S] cluster.

It catalyses the reaction 5-amino-1-(5-phospho-beta-D-ribosyl)imidazole + S-adenosyl-L-methionine = 4-amino-2-methyl-5-(phosphooxymethyl)pyrimidine + CO + 5'-deoxyadenosine + formate + L-methionine + 3 H(+). It participates in cofactor biosynthesis; thiamine diphosphate biosynthesis. Catalyzes the synthesis of the hydroxymethylpyrimidine phosphate (HMP-P) moiety of thiamine from aminoimidazole ribotide (AIR) in a radical S-adenosyl-L-methionine (SAM)-dependent reaction. This chain is Phosphomethylpyrimidine synthase, found in Agrobacterium fabrum (strain C58 / ATCC 33970) (Agrobacterium tumefaciens (strain C58)).